We begin with the raw amino-acid sequence, 308 residues long: UPF0282 protein SSO3251 (308 aa).

It belongs to the UPF0282 family.

The protein is UPF0282 protein SSO3251 of Saccharolobus solfataricus (strain ATCC 35092 / DSM 1617 / JCM 11322 / P2) (Sulfolobus solfataricus).